The chain runs to 680 residues: WD repeat-containing protein 48 homolog (680 aa).

WD repeat units follow at residues 26–65, 71–110, 113–152, 164–203, 206–245, 248–287, 290–329, and 350–389; these read QHRN…SEKY, HHND…CMST, THRD…ALTA, GSKD…RSMK, GHTE…CVQT, VHKE…NKTL, EEQA…RCTM, and KGGA…KKEQ. The segment at 592 to 616 is disordered; that stretch reads ETTPSGGNANNSLQNSQSDANSEGS.

This sequence belongs to the WD repeat WDR48 family. As to quaternary structure, catalytic component of the Usp12-46 deubiquitylase complex consisting of Usp12-46, Wdr20 and Uaf1; regulatory subunit that, together wtih Wdr20, stabilizes Usp12-46. The Usp12-46 deubiquitylase complex associates with arr/arrow; the interaction leads to deubiquitination and stabilization of arr/arrow.

In terms of biological role, regulatory component of the Usp12-46 deubiquitylase complex. activates deubiquitination by increasing the catalytic turnover without increasing the affinity of deubiquitinating enzymes for the substrate. The complex deubiquitylates the wg/wingless-signaling receptor arr/arrow, which stabilizes the receptor and increases its concentration at the cell surface; this enhances the sensitivity of cells to wg/wingless-signal stimulation. This increases the amplitude and spatial range of the signaling response to the wg/wingless morphogen gradient, facilitating the precise concentration-dependent regulation of its target genes. Together with Wdr20 and Usp12-46 required for wg/wingless-mediated signaling in the wing imaginal disc and for wg/wingless-dependent regulation of intestinal stem cell proliferation. This Drosophila erecta (Fruit fly) protein is WD repeat-containing protein 48 homolog.